The following is a 233-amino-acid chain: Tetrahydromethanopterin S-methyltransferase subunit D (233 aa).

Transmembrane regions (helical) follow at residues 4 to 24, 39 to 59, 67 to 87, 133 to 153, 166 to 186, and 209 to 229; these read LLLI…VHFV, VGTG…ITAA, LMIM…TMLV, FVSG…IYWA, MGAA…NAVI, and GIVA…LLVY.

It belongs to the MtrD family. As to quaternary structure, the complex is composed of 8 subunits; MtrA, MtrB, MtrC, MtrD, MtrE, MtrF, MtrG and MtrH.

The protein localises to the cell membrane. The enzyme catalyses 5-methyl-5,6,7,8-tetrahydromethanopterin + coenzyme M + 2 Na(+)(in) = 5,6,7,8-tetrahydromethanopterin + methyl-coenzyme M + 2 Na(+)(out). It participates in one-carbon metabolism; methanogenesis from CO(2); methyl-coenzyme M from 5,10-methylene-5,6,7,8-tetrahydromethanopterin: step 2/2. Functionally, part of a complex that catalyzes the formation of methyl-coenzyme M and tetrahydromethanopterin from coenzyme M and methyl-tetrahydromethanopterin. This is an energy-conserving, sodium-ion translocating step. This is Tetrahydromethanopterin S-methyltransferase subunit D from Methanothermobacter marburgensis (strain ATCC BAA-927 / DSM 2133 / JCM 14651 / NBRC 100331 / OCM 82 / Marburg) (Methanobacterium thermoautotrophicum).